Here is a 571-residue protein sequence, read N- to C-terminus: Podocalyxin (571 aa).

A signal peptide spans 1 to 22 (MRPAPPPPLLLLLLLLPPPSLS). Topologically, residues 23-474 (HDGTIIAATS…EETEDRFSMP (452 aa)) are extracellular. The segment at 94 to 361 (NTVIAPDQDE…QGDDRIKCES (268 aa)) is disordered. The span at 106–116 (STNPTIATSDS) shows a compositional bias: polar residues. Asn-123 is a glycosylation site (N-linked (GlcNAc...) asparagine). 4 stretches are compositionally biased toward polar residues: residues 126–144 (ILPSATNSMKPDTPVTQTA), 151–169 (NPGTTVSHMTSENTEQTTS), 176–203 (KPSSITPALTSIITPTSPRQPSANSTTL), and 218–245 (TASSSLGTKVVPSSSLYGTSPTRTSSVT). An N-linked (GlcNAc...) asparagine glycan is attached at Asn-199. Low complexity predominate over residues 282-300 (TTSLPSETESLESPSSESP). Residues 301–311 (SQPPKLRPTGP) are compositionally biased toward pro residues. The segment covering 312 to 322 (PSSGSSGPAAS) has biased composition (low complexity). Residues Asn-373 and Asn-383 are each glycosylated (N-linked (GlcNAc...) asparagine). Residues 475–495 (LIITIVCMASFLLLVAALYGC) traverse the membrane as a helical segment. Residues 496–571 (CHQRLSQRKD…DLDEEEDTHL (76 aa)) are Cytoplasmic-facing. Thr-531 is subject to Phosphothreonine. A Phosphoserine modification is found at Ser-550. Phosphothreonine is present on Thr-569.

Belongs to the podocalyxin family. In terms of assembly, found in a complex with EZR, PODXL and NHERF2. Associates with the actin cytoskeleton through complex formation with EZR and NHERF2. Interacts (via the C-terminal PDZ-binding motif DTHL) with NHERF1 (via the PDZ domains); interaction is not detected in glomerular epithelium cells. Interacts (via the C-terminal PDZ-binding motif DTHL) with NHERF2 (via the PDZ 1 domain); interaction is detected in glomerular epithelium cells. Interacts with EZR. Monomer; when associated with the membrane raft. Oligomer; when integrated in the apical membrane. Interacts with NHERF2. Interacts (via the C-terminal PDZ-binding motif DTHL) with NHERF1 (via the PDZ domains); the interaction take place early in the secretory pathway and is necessary for its apical membrane sorting. N- and O-linked glycosylated. Sialoglycoprotein. As to expression, expressed in glomerular and tubular epithelial cells and peritubular capillaries of the kidney (at protein level). Expressed in heart, lung, renal cortex and medulla, kidney and muscle.

The protein resides in the apical cell membrane. The protein localises to the membrane raft. It localises to the cell projection. It is found in the lamellipodium. Its subcellular location is the filopodium. The protein resides in the ruffle. The protein localises to the microvillus. It localises to the membrane. In terms of biological role, involved in the regulation of both adhesion and cell morphology and cancer progression. Functions as an anti-adhesive molecule that maintains an open filtration pathway between neighboring foot processes in the podocyte by charge repulsion. Acts as a pro-adhesive molecule, enhancing the adherence of cells to immobilized ligands, increasing the rate of migration and cell-cell contacts in an integrin-dependent manner. Induces the formation of apical actin-dependent microvilli. Involved in the formation of a preapical plasma membrane subdomain to set up initial epithelial polarization and the apical lumen formation during renal tubulogenesis. Plays a role in cancer development and aggressiveness by inducing cell migration and invasion through its interaction with the actin-binding protein EZR. Affects EZR-dependent signaling events, leading to increased activities of the MAPK and PI3K pathways in cancer cells. The sequence is that of Podocalyxin (PODXL) from Canis lupus familiaris (Dog).